Here is a 163-residue protein sequence, read N- to C-terminus: Ribosome maturation factor RimP (163 aa).

The segment at 66-85 (ALDRDDPVPGPPYELEVSSP) is disordered.

Belongs to the RimP family.

It is found in the cytoplasm. In terms of biological role, required for maturation of 30S ribosomal subunits. The chain is Ribosome maturation factor RimP from Kocuria rhizophila (strain ATCC 9341 / DSM 348 / NBRC 103217 / DC2201).